Here is a 211-residue protein sequence, read N- to C-terminus: MDITIVNHPLVASRLTLMRDERSDNAAFRAAASDLGAMLIYEASRDLAVEHFDTQTPVAVAEGTRLEKPPIIVPIIRAGLGMIDPALSMIPDAQVGFIGLARDEETHEPVPYLEALPEDLSDQPVFLVDPMLATGGSLLHAIRLLAERGATDITAICMVSAQPGVDALKNSGLPCRLVTAAIDPELNEDAYIVPGLGDAGDRLYGPRNIEL.

Residues arginine 77, arginine 102, and 129–137 (DPMLATGGS) each bind 5-phospho-alpha-D-ribose 1-diphosphate. Uracil-binding positions include isoleucine 192 and 197-199 (GDA). Aspartate 198 is a binding site for 5-phospho-alpha-D-ribose 1-diphosphate.

It belongs to the UPRTase family. Mg(2+) is required as a cofactor.

The catalysed reaction is UMP + diphosphate = 5-phospho-alpha-D-ribose 1-diphosphate + uracil. It functions in the pathway pyrimidine metabolism; UMP biosynthesis via salvage pathway; UMP from uracil: step 1/1. Allosterically activated by GTP. In terms of biological role, catalyzes the conversion of uracil and 5-phospho-alpha-D-ribose 1-diphosphate (PRPP) to UMP and diphosphate. The protein is Uracil phosphoribosyltransferase of Corynebacterium efficiens (strain DSM 44549 / YS-314 / AJ 12310 / JCM 11189 / NBRC 100395).